A 76-amino-acid chain; its full sequence is cAMP-dependent protein kinase inhibitor alpha (76 aa).

At threonine 2 the chain carries Blocked amino end (Thr). The segment at lysine 49–serine 76 is disordered.

The protein belongs to the PKI family.

Extremely potent competitive inhibitor of cAMP-dependent protein kinase activity, this protein interacts with the catalytic subunit of the enzyme after the cAMP-induced dissociation of its regulatory chains. This is cAMP-dependent protein kinase inhibitor alpha (PKIA) from Gallus gallus (Chicken).